The chain runs to 432 residues: Glutamyl-tRNA reductase (432 aa).

Residues 49 to 52, Ser107, 112 to 114, and Gln118 each bind substrate; these read TCNR and ETQ. Cys50 functions as the Nucleophile in the catalytic mechanism. 186 to 191 is an NADP(+) binding site; it reads GAGEMG.

It belongs to the glutamyl-tRNA reductase family. As to quaternary structure, homodimer.

It carries out the reaction (S)-4-amino-5-oxopentanoate + tRNA(Glu) + NADP(+) = L-glutamyl-tRNA(Glu) + NADPH + H(+). Its pathway is porphyrin-containing compound metabolism; protoporphyrin-IX biosynthesis; 5-aminolevulinate from L-glutamyl-tRNA(Glu): step 1/2. Its function is as follows. Catalyzes the NADPH-dependent reduction of glutamyl-tRNA(Glu) to glutamate 1-semialdehyde (GSA). This Campylobacter jejuni subsp. doylei (strain ATCC BAA-1458 / RM4099 / 269.97) protein is Glutamyl-tRNA reductase.